A 10624-amino-acid polypeptide reads, in one-letter code: Extracellular matrix-binding protein ebh (10624 aa).

A signal peptide spans 1–39 (MNYRDKIQKFSIRKYTVGTFSTVIATLVFLGFNTSQAHA). Over residues 41–59 (ETNQPASVVKQKQQSNNEQ) the composition is skewed to polar residues. Disordered regions lie at residues 41–152 (ETNQ…GNDN), 250–277 (PQRQ…PRSV), 1347–1372 (NEKA…NATT), and 2418–2438 (TITP…TLTA). Residues 65 to 78 (SQVQNSQNSQNSQS) are compositionally biased toward low complexity. Positions 79–117 (LSATHENEQPNNSQANLVNQKVAQSSTTNDEQPASQNVN) are enriched in polar residues. Positions 130 to 140 (PDKEESKHKQN) are enriched in basic and acidic residues. Polar residues-rich tracts occupy residues 141 to 151 (ESQSANKNGND), 250 to 266 (PQRQ…QTRS), 1360 to 1372 (YRTT…NATT), and 2427 to 2438 (HSVSSNPSTLTA). 57 consecutive FIVAR domains span residues 2524–2580 (AKNH…VSDA), 2610–2666 (SKNN…ISDE), 2687–2750 (DTHA…VQSA), 2780–2836 (AKTK…IAAE), 2864–2919 (AKTQ…IRQN), 2947–3002 (AKNQ…INTN), 3030–3085 (AKTQ…INDK), 3154–3212 (AMTK…VNQK), 3280–3339 (AMTG…VNNA), 3407–3465 (AMGN…VNRA), 3533–3591 (AMGN…VTEA), 3659–3717 (AMNT…ITQK), 3785–3843 (AMAN…VEAA), 3911–3969 (AMGN…VEQA), 4037–4095 (AMGQ…VTAA), 4163–4221 (AMKG…ITQA), 4289–4347 (QMGN…VEAA), 4415–4473 (AMAN…VENA), 4541–4599 (AMGT…INQI), 4667–4725 (AMGQ…VDRA), 4793–4851 (AMNS…VDNA), 4919–4977 (AMGA…INDM), 5045–5103 (AMTA…VNSA), 5171–5229 (AMKG…ITQA), 5297–5355 (AMHS…VEQA), 5423–5481 (AMGQ…VERA), 5549–5607 (AMTA…VTNA), 5675–5733 (AMKG…INQA), 5801–5859 (AMTN…VETA), 6053–6111 (AMNQ…INQK), 6179–6236 (AMGN…VQAA), 6304–6362 (AMGQ…VEAA), 6430–6488 (AMQR…VEQA), 6556–6614 (AMDQ…VTAA), 6682–6740 (AMNQ…VTQA), 6808–6866 (AMER…VEAA), 6934–6992 (AMGN…VEAA), 7060–7118 (AMDK…INQA), 7186–7244 (AMGN…VEQA), 7312–7370 (AMTQ…ITAA), 7438–7496 (AMTQ…IQQA), 7564–7622 (AMTN…VEQA), 7690–7748 (AMTQ…VAQA), 7816–7874 (AMGT…VTKA), 7942–8000 (AMGN…ITRA), 8068–8129 (AMDQ…ITNE), 8194–8252 (AMEL…VNGA), 8320–8378 (AMGN…VEQA), 8446–8503 (AMHG…INQV), 8571–8629 (LMDA…VSSA), 8697–8755 (AMKA…IDQA), 8823–8881 (AMEA…VEQL), 8949–9007 (AMQA…VEQL), 9075–9133 (AMET…VEQA), 9201–9255 (SMDQ…VDQA), 9323–9382 (AMDQ…VIKL), and 9577–9633 (AMET…INGA). Residues 10430-10450 (IKNAIGVVGISGLLASFWFFI) form a helical membrane-spanning segment. Residues 10527–10624 (RRKEDEEDVE…KKKKSKKNKK (98 aa)) are disordered. Composition is skewed to basic and acidic residues over residues 10542 to 10552 (TDEKVLKDNEH) and 10591 to 10601 (QKDNQSKDKKS). The segment covering 10606–10624 (TSKKVAAKKKKKKSKKNKK) has biased composition (basic residues).

The protein localises to the cell membrane. In Staphylococcus aureus (strain JH1), this protein is Extracellular matrix-binding protein ebh (ebh).